Consider the following 525-residue polypeptide: MGAPSSLLFSTAHWRTVPFLLAFWVLLSTGTAEDPTMTPEFLRHISEKIPEEYQNPHCFTRDLNDFICFWEGERRKNASFSYSEDDQIKWCQLRTEVASNNTWWYICEFPVTDVVLFAGITISAYPCHKCQTAREIYINELVLLNPPLNVTVKEKQDPRGLLISWKPPHFQKNHDINNEIKYQVNYSTPGADMQTVEVEAGNTEIFLTDIVPAAYTVTVRCKADGVSYNGYWSDWTAPITIATIIDLRLLLLLSIAIFVALIAGVGVYIFMRHGMYLKHKVWPQVPTPENNFQGLFTTHKGNFKLWLGQADAYLLWISRHVFQEDPSSTLEVLSELPPAALPQSFNPNPLKDSYVVLDENRMPCSLEWLEAQRHKTVIVGAESMDSRLQTVNKDVVLEDTSKGQIAVKANNRVHSLEGDGSQGEAFREDEYVEAPRMEHERHRVSRENSVSSDGKQSIPSSFEYTELQTCEGLLSPKPRPVPPRMPLKYAYLDMSSSGEHSPPPSPNFYQNSPITNFLAPIYSQS.

The signal sequence occupies residues 1–32; that stretch reads MGAPSSLLFSTAHWRTVPFLLAFWVLLSTGTA. Residues 33-249 lie on the Extracellular side of the membrane; that stretch reads EDPTMTPEFL…TIATIIDLRL (217 aa). A disulfide bridge links C58 with C68. N-linked (GlcNAc...) asparagine glycans are attached at residues N77, N100, N149, and N185. Residues C91 and C107 are joined by a disulfide bond. The Fibronectin type-III domain maps to 146–246; sequence PPLNVTVKEK…APITIATIID (101 aa). Residues 232-236 carry the WSXWS motif motif; the sequence is WSDWT. Residues 250 to 270 traverse the membrane as a helical segment; sequence LLLLSIAIFVALIAGVGVYIF. Topologically, residues 271–525 are cytoplasmic; sequence MRHGMYLKHK…NFLAPIYSQS (255 aa). Residues 281–289 carry the Box 1 motif motif; it reads VWPQVPTPE. Disordered stretches follow at residues 434–459 and 492–513; these read APRMEHERHRVSRENSVSSDGKQSIP and LDMSSSGEHSPPPSPNFYQNSP. The span at 447 to 459 shows a compositional bias: polar residues; sequence ENSVSSDGKQSIP. An ITIM motif motif is present at residues 487–492; the sequence is LKYAYL.

This sequence belongs to the type I cytokine receptor family. Type 1 subfamily. Expressed in the ventral blood island from stage 28 through to stage 36. Expressed in the circulating blood by stage 40. In the adult, highly expressed in peripheral blood cells including immature erythrocytes and basophils, and moderately expressed in the hematopoietic organs: liver, kidney and spleen. Expressed at a low level in adult brain.

The protein localises to the cell membrane. Its function is as follows. Receptor for erythropoietin. Mediates erythropoietin-induced erythroblast proliferation and differentiation. This Xenopus laevis (African clawed frog) protein is Erythropoietin receptor.